A 131-amino-acid chain; its full sequence is Small ribosomal subunit protein uS11 (131 aa).

This sequence belongs to the universal ribosomal protein uS11 family. In terms of assembly, part of the 30S ribosomal subunit. Interacts with proteins S7 and S18. Binds to IF-3.

Functionally, located on the platform of the 30S subunit, it bridges several disparate RNA helices of the 16S rRNA. Forms part of the Shine-Dalgarno cleft in the 70S ribosome. The chain is Small ribosomal subunit protein uS11 from Deinococcus geothermalis (strain DSM 11300 / CIP 105573 / AG-3a).